A 232-amino-acid chain; its full sequence is Small ribosomal subunit protein uS3 (232 aa).

The KH type-2 domain occupies 39–107 (VRQFLTKELA…PAQINIAEVR (69 aa)).

Belongs to the universal ribosomal protein uS3 family. Part of the 30S ribosomal subunit. Forms a tight complex with proteins S10 and S14.

Functionally, binds the lower part of the 30S subunit head. Binds mRNA in the 70S ribosome, positioning it for translation. The chain is Small ribosomal subunit protein uS3 from Yersinia pestis bv. Antiqua (strain Antiqua).